The sequence spans 698 residues: Protein SST2 (698 aa).

The tract at residues 10-203 is fungal-DR; that stretch reads ELSSKNFSRT…GAKPNVWSPT (194 aa). Position 252 is a phosphoserine (S252). One can recognise a DEP domain in the interval 273–358; sequence SNAGIRLFEN…SRSSFFTLSK (86 aa). S408 is modified (phosphoserine). The RGS domain occupies 420–689; sequence KLDYVLTDPG…TQSDVYKDAS (270 aa). Position 539 is a phosphoserine; by MAPK (S539). Positions 545 to 586 are disordered; it reads FPTNLYDPSPASAESAASSISSTEADTLGEPPEVSLKPSKNL. Low complexity predominate over residues 551 to 570; that stretch reads DPSPASAESAASSISSTEAD. At S587 the chain carries Phosphoserine.

Phosphorylated by FUS3 and KSS1.

In terms of biological role, desensitization to alpha-factor pheromone. Is involved in regulating the signaling pathway for responding to mating pheromone. This is Protein SST2 (SST2) from Saccharomyces cerevisiae (strain ATCC 204508 / S288c) (Baker's yeast).